The sequence spans 554 residues: Dihydroxy-acid dehydratase (554 aa).

C51 serves as a coordination point for [2Fe-2S] cluster. D83 is a binding site for Mg(2+). A [2Fe-2S] cluster-binding site is contributed by C124. Mg(2+) contacts are provided by D125 and K126. K126 carries the N6-carboxylysine modification. C193 contacts [2Fe-2S] cluster. Mg(2+) is bound at residue E444. Catalysis depends on S470, which acts as the Proton acceptor.

This sequence belongs to the IlvD/Edd family. In terms of assembly, homodimer. [2Fe-2S] cluster serves as cofactor. Mg(2+) is required as a cofactor.

The catalysed reaction is (2R)-2,3-dihydroxy-3-methylbutanoate = 3-methyl-2-oxobutanoate + H2O. It catalyses the reaction (2R,3R)-2,3-dihydroxy-3-methylpentanoate = (S)-3-methyl-2-oxopentanoate + H2O. It participates in amino-acid biosynthesis; L-isoleucine biosynthesis; L-isoleucine from 2-oxobutanoate: step 3/4. Its pathway is amino-acid biosynthesis; L-valine biosynthesis; L-valine from pyruvate: step 3/4. Functionally, functions in the biosynthesis of branched-chain amino acids. Catalyzes the dehydration of (2R,3R)-2,3-dihydroxy-3-methylpentanoate (2,3-dihydroxy-3-methylvalerate) into 2-oxo-3-methylpentanoate (2-oxo-3-methylvalerate) and of (2R)-2,3-dihydroxy-3-methylbutanoate (2,3-dihydroxyisovalerate) into 2-oxo-3-methylbutanoate (2-oxoisovalerate), the penultimate precursor to L-isoleucine and L-valine, respectively. The sequence is that of Dihydroxy-acid dehydratase from Vesicomyosocius okutanii subsp. Calyptogena okutanii (strain HA).